Consider the following 477-residue polypeptide: Protoporphyrinogen oxidase (477 aa).

FAD-binding positions include 9–14, 34–35, tryptophan 42, 57–60, valine 257, alanine 449, and 454–456; these read GGGISG, ES, GPRG, and VAV.

It belongs to the protoporphyrinogen/coproporphyrinogen oxidase family. Protoporphyrinogen oxidase subfamily. As to quaternary structure, monomer. Homodimer. It depends on FAD as a cofactor. As to expression, expressed in heart, brain, placenta, lung, liver, skeletal muscle, kidney and pancreas.

It localises to the mitochondrion inner membrane. It catalyses the reaction protoporphyrinogen IX + 3 O2 = protoporphyrin IX + 3 H2O2. The protein operates within porphyrin-containing compound metabolism; protoporphyrin-IX biosynthesis; protoporphyrin-IX from protoporphyrinogen-IX: step 1/1. Catalyzes the 6-electron oxidation of protoporphyrinogen-IX to form protoporphyrin-IX. The polypeptide is Protoporphyrinogen oxidase (PPOX) (Homo sapiens (Human)).